Reading from the N-terminus, the 340-residue chain is MKVTHFHFGKDGGAERFFVHLVNALAERGVEQTAIIRPGRGWRRDIEGAAKIRESHFRNLSLDRILLPLKVKHMARREKPDVLMAWAPRASELMPNYKGAFKISRLGDYPTRLSYFRNTDCIVCNTPGIAERVSDLGWKREIRVISNFTGTGRVVAVDRAKLDTPADAPVVMSMGRFVERKGFHTLIEAVARLPGVYLWLLGDGEERDNLHKLATDLGVSGRVRFAGWQDDTRPFLAAVDVFVMSSSHEPLGNVILESWAQGTPVVSTRSEGPQWFMRDGENGLMVDIGDAEGFARAIEQIVADNSLRTRLAERGHETLVGQFSREAITDAYLQLLASKP.

The protein belongs to the glycosyltransferase group 1 family. Glycosyltransferase 4 subfamily.

It participates in bacterial outer membrane biogenesis; LPS core biosynthesis. The polypeptide is Lipopolysaccharide core biosynthesis glycosyltransferase LpsE (lpsE) (Rhizobium meliloti (strain 1021) (Ensifer meliloti)).